A 55-amino-acid polypeptide reads, in one-letter code: Spermatid nuclear transition protein 1 (55 aa).

Residues 1–42 (MSTSRKLKSHGMRRSKSRSPHKGVKRGGSKRKYRKGNLKSRK) show a composition bias toward basic residues. The interval 1–55 (MSTSRKLKSHGMRRSKSRSPHKGVKRGGSKRKYRKGNLKSRKRGDDANRNYRSHL) is disordered. 2 positions are modified to phosphoserine: serine 9 and serine 40.

It belongs to the nuclear transition protein 1 family. As to expression, expressed by spermatids (at protein level).

Its subcellular location is the nucleus. It localises to the chromosome. Functionally, plays a key role in the replacement of histones to protamine in the elongating spermatids of mammals. In condensing spermatids, loaded onto the nucleosomes, where it promotes the recruitment and processing of protamines, which are responsible for histone eviction. The polypeptide is Spermatid nuclear transition protein 1 (TNP1) (Homo sapiens (Human)).